We begin with the raw amino-acid sequence, 527 residues long: Bifunctional purine biosynthesis protein PurH (527 aa).

In terms of domain architecture, MGS-like spans 1 to 144; that stretch reads MNRRALISVS…KNHESVAIIV (144 aa).

This sequence belongs to the PurH family.

The catalysed reaction is (6R)-10-formyltetrahydrofolate + 5-amino-1-(5-phospho-beta-D-ribosyl)imidazole-4-carboxamide = 5-formamido-1-(5-phospho-D-ribosyl)imidazole-4-carboxamide + (6S)-5,6,7,8-tetrahydrofolate. It carries out the reaction IMP + H2O = 5-formamido-1-(5-phospho-D-ribosyl)imidazole-4-carboxamide. The protein operates within purine metabolism; IMP biosynthesis via de novo pathway; 5-formamido-1-(5-phospho-D-ribosyl)imidazole-4-carboxamide from 5-amino-1-(5-phospho-D-ribosyl)imidazole-4-carboxamide (10-formyl THF route): step 1/1. It functions in the pathway purine metabolism; IMP biosynthesis via de novo pathway; IMP from 5-formamido-1-(5-phospho-D-ribosyl)imidazole-4-carboxamide: step 1/1. The polypeptide is Bifunctional purine biosynthesis protein PurH (Heliobacterium modesticaldum (strain ATCC 51547 / Ice1)).